Reading from the N-terminus, the 260-residue chain is Putative ABC transporter ATP-binding protein PH0132 (260 aa).

In terms of domain architecture, ABC transporter spans 2–234 (IEFRDVWFWY…DLEGFGLKEP (233 aa)). 34–41 (GPNGSGKT) is a binding site for ATP.

The protein belongs to the ABC transporter superfamily.

The protein resides in the cell membrane. Its function is as follows. Probably part of an ABC transporter complex. Responsible for energy coupling to the transport system. The polypeptide is Putative ABC transporter ATP-binding protein PH0132 (Pyrococcus horikoshii (strain ATCC 700860 / DSM 12428 / JCM 9974 / NBRC 100139 / OT-3)).